We begin with the raw amino-acid sequence, 104 residues long: Iron-sulfur cluster assembly protein CyaY (104 aa).

Belongs to the frataxin family.

Involved in iron-sulfur (Fe-S) cluster assembly. May act as a regulator of Fe-S biogenesis. This Aliivibrio salmonicida (strain LFI1238) (Vibrio salmonicida (strain LFI1238)) protein is Iron-sulfur cluster assembly protein CyaY.